A 56-amino-acid polypeptide reads, in one-letter code: Large ribosomal subunit protein bL33A (56 aa).

It belongs to the bacterial ribosomal protein bL33 family.

The polypeptide is Large ribosomal subunit protein bL33A (Nocardia farcinica (strain IFM 10152)).